The following is a 500-amino-acid chain: Protein adenylyltransferase Fic (500 aa).

Residues 39-59 (LSFLIFFVIGSLFSGLMFALL) traverse the membrane as a helical segment. 2 TPR repeats span residues 122–155 (ALSS…SPRH) and 156–190 (PEIL…NPSH). Residues 247–252 (SVGIEG) carry the Inhibitory (S/T)XXXE(G/N) motif motif. ATP contacts are provided by residues Glu251 and 333 to 336 (VGGH). In terms of domain architecture, Fido spans 302-437 (ITLKDLLEIH…IRPFVRFIAD (136 aa)). Residue His380 is part of the active site. Residues 384–391 (DGNGRTSR), 416–417 (YY), and Asn424 each bind ATP. Residues 477-500 (GREGGSTVHEGSGTGDSIRIGTMW) are disordered.

The protein belongs to the fic family. As to quaternary structure, homodimer.

Its subcellular location is the membrane. The catalysed reaction is L-tyrosyl-[protein] + ATP = O-(5'-adenylyl)-L-tyrosyl-[protein] + diphosphate. It catalyses the reaction L-threonyl-[protein] + ATP = 3-O-(5'-adenylyl)-L-threonyl-[protein] + diphosphate. It carries out the reaction 3-O-(5'-adenylyl)-L-threonyl-[protein] + H2O = L-threonyl-[protein] + AMP + H(+). Its activity is regulated as follows. The side chain of Glu-251 determines which of the two opposing activities (AMPylase or de-AMPylase) will take place. In response to endoplasmic reticulum stress, mediates de-AMPylase activity. Adenylyltransferase activity is inhibited by the inhibitory helix present at the N-terminus: Glu-251 binds ATP and competes with ATP-binding at Arg-391, thereby preventing adenylyltransferase activity. In unstressed cells, disengagement of Glu-251 promotes adenylyltransferase activity. Activation dissociates ATP-binding from Glu-251, allowing ordered binding of the entire ATP moiety with the alpha-phosphate in an orientation that is productive for accepting an incoming target hydroxyl side chain. Protein that can both mediate the addition of adenosine 5'-monophosphate (AMP) to specific residues of target proteins (AMPylation), and the removal of the same modification from target proteins (de-AMPylation), depending on the context. The side chain of Glu-251 determines which of the two opposing activities (AMPylase or de-AMPylase) will take place. Acts as a key regulator of the unfolded protein response (UPR) by mediating AMPylation or de-AMPylation of Hsc70-3/BiP. In unstressed cells, acts as an adenylyltransferase by mediating AMPylation of Hsc70-3/BiP at 'Thr-518', thereby inactivating it. In response to endoplasmic reticulum stress, acts as a phosphodiesterase by mediating removal of ATP (de-AMPylation) from Hsc70-3/BiP at 'Thr-518', leading to restore HSPA5/BiP activity. The polypeptide is Protein adenylyltransferase Fic (Culex quinquefasciatus (Southern house mosquito)).